The primary structure comprises 160 residues: Small RNA binding protein 1 (160 aa).

One can recognise an RRM domain in the interval 8–86 (FRCFVGGLAW…RNITVNEAQQ (79 aa)). The segment at 82–160 (NEAQQRGGGG…GGGSEGGWRN (79 aa)) is disordered. The span at 87–160 (RGGGGGGGYN…GGGSEGGWRN (74 aa)) shows a compositional bias: gly residues. The tract at residues 88-157 (GGGGGGGYNR…GSGGGGSEGG (70 aa)) is glycine-rich (GR) required for cell-to-cell movement.

This sequence belongs to the GR-RBP family. As to quaternary structure, binds to small phloem-mobile single-stranded RNAs (ss-sRNA, e.g. small interfering RNA (siRNA) and microRNA (miRNA)) in the phloeme exudate, including viral-derived sRNA (vsiRNA). As to expression, accumulates in phloem exudates.

Its subcellular location is the secreted. Functionally, possibly has a role in RNA transcription or processing during stress. Binds sequence non-specifically to RNAs and DNAs. Mediates cell-to-cell trafficking of RNA interference (RNAi) signals (small RNAs (sRNA), e.g. small interfering RNA (siRNA) and microRNA (miRNA)) which regulate growth and development, as well as responses to environmental inputs, including pathogen attack; can compromise zucchini yellow mosaic virus (ZYMV) and tobacco rattle virus (TRV) infections at the early stage. This chain is Small RNA binding protein 1, found in Cucumis sativus (Cucumber).